The following is a 464-amino-acid chain: MSTAALVEGKIVQCIGAVIDVEFPRDSMPKIYDALILDGSELTLEVQQQLGDGVVRTICLGASDGLRRGLTVKNTAKPISVPVGKPTLGRIMDVLGRPIDEAGPIESETTRSIHQKAPAFDELSPSTELLETGIKVIDLICPFAKGGKVGLFGGAGVGKTVNMMELINNIAKEHGGYSVFAGVGERTREGNDFYHEMKDSNVLDKVALVYGQMNEPPGNRLRVALTGLTMAEHFRDEGLDVLFFVDNIYRFTLAGTEVSALLGRMPSAVGYQPTLAEEMGKLQERITSTKKGSITSVQAVYVPADDLTDPSPATTFGHLDATVVLSRDIASLGIYPAVDPLDSTSRQIDPNVIGEEHYSITRRVQQTLQRYKELRDIIAILGMDELSPEDKLSVARARKIQRFLSQPFHVAEVFTGSPGKYVPLKETIRGFKMIVDGECDHLPEQAFYMVGTIDEAFEKAKKIS.

153–160 provides a ligand contact to ATP; that stretch reads GGAGVGKT.

The protein belongs to the ATPase alpha/beta chains family. In terms of assembly, F-type ATPases have 2 components, CF(1) - the catalytic core - and CF(0) - the membrane proton channel. CF(1) has five subunits: alpha(3), beta(3), gamma(1), delta(1), epsilon(1). CF(0) has three main subunits: a(1), b(2) and c(9-12). The alpha and beta chains form an alternating ring which encloses part of the gamma chain. CF(1) is attached to CF(0) by a central stalk formed by the gamma and epsilon chains, while a peripheral stalk is formed by the delta and b chains.

It localises to the cell inner membrane. The catalysed reaction is ATP + H2O + 4 H(+)(in) = ADP + phosphate + 5 H(+)(out). Functionally, produces ATP from ADP in the presence of a proton gradient across the membrane. The catalytic sites are hosted primarily by the beta subunits. The polypeptide is ATP synthase subunit beta (Burkholderia lata (strain ATCC 17760 / DSM 23089 / LMG 22485 / NCIMB 9086 / R18194 / 383)).